We begin with the raw amino-acid sequence, 182 residues long: NADH-quinone oxidoreductase subunit C 2 (182 aa).

A disordered region spans residues tyrosine 153–arginine 182.

The protein belongs to the complex I 30 kDa subunit family. In terms of assembly, NDH-1 is composed of 14 different subunits. Subunits NuoB, C, D, E, F, and G constitute the peripheral sector of the complex.

It is found in the cell inner membrane. It catalyses the reaction a quinone + NADH + 5 H(+)(in) = a quinol + NAD(+) + 4 H(+)(out). Its function is as follows. NDH-1 shuttles electrons from NADH, via FMN and iron-sulfur (Fe-S) centers, to quinones in the respiratory chain. The immediate electron acceptor for the enzyme in this species is believed to be ubiquinone. Couples the redox reaction to proton translocation (for every two electrons transferred, four hydrogen ions are translocated across the cytoplasmic membrane), and thus conserves the redox energy in a proton gradient. The polypeptide is NADH-quinone oxidoreductase subunit C 2 (Rhizobium meliloti (strain 1021) (Ensifer meliloti)).